Consider the following 398-residue polypeptide: Serine/threonine-protein kinase 32A (398 aa).

A lipid anchor (N-myristoyl glycine) is attached at glycine 2. Residues 23–281 enclose the Protein kinase domain; it reads FEILRAIGKG…LTDIQNFPYM (259 aa). ATP contacts are provided by residues 29–37 and lysine 52; that span reads IGKGSFGKV. Catalysis depends on aspartate 146, which acts as the Proton acceptor. The segment at 379–398 is disordered; the sequence is ALEQTKNNTEEEEDGQNNNL. A compositionally biased stretch (acidic residues) spans 388–398; the sequence is EEEEDGQNNNL.

Belongs to the protein kinase superfamily. Ser/Thr protein kinase family. Requires Mg(2+) as cofactor.

The protein localises to the cell membrane. The enzyme catalyses L-seryl-[protein] + ATP = O-phospho-L-seryl-[protein] + ADP + H(+). It catalyses the reaction L-threonyl-[protein] + ATP = O-phospho-L-threonyl-[protein] + ADP + H(+). This chain is Serine/threonine-protein kinase 32A, found in Mus musculus (Mouse).